Reading from the N-terminus, the 1084-residue chain is Histone deacetylase 4 (1084 aa).

A coiled-coil region spans residues 67 to 177 (REQQLQQELL…STEVKMKLQE (111 aa)). The interval 118 to 313 (MLAMKHQQEL…NNSSGSVSAE (196 aa)) is interaction with MEF2A. A compositionally biased stretch (basic and acidic residues) spans 133–163 (KLERHRQEQELEKQHREQKLQQLKNKEKGKE). Disordered regions lie at residues 133-166 (KLER…ESAV), 206-226 (TQHS…TSYN), and 240-315 (PLRK…AENG). S210 bears the Phosphoserine mark. Phosphoserine; by CaMK4 and SIK1 is present on S246. Residues 259–274 (KVAERRSSPLLRRKDG) are compositionally biased toward basic and acidic residues. Residues 290–312 (SACSSAPGSGPSSPNNSSGSVSA) show a composition bias toward low complexity. Positions 349–354 (PSLPNI) match the PxLPxI/L motif; mediates interaction with ANKRA2 and 14-3-3 proteins motif. Residue S350 is modified to Phosphoserine. At S467 the chain carries Phosphoserine; by CaMK4 and SIK1. Disordered stretches follow at residues 509 to 531 (PKPS…ELRE), 548 to 585 (KEAH…QPSE), and 626 to 646 (PLSR…VQEP). The span at 516-531 (RQPESHPEETEEELRE) shows a compositional bias: basic and acidic residues. Residue K559 forms a Glycyl lysine isopeptide (Lys-Gly) (interchain with G-Cter in SUMO) linkage. A Phosphoserine modification is found at S565. Positions 629–641 (RAQSSPASATFPV) are enriched in polar residues. S632 carries the phosphoserine; by CaMK4 modification. At S633 the chain carries Phosphoserine. The tract at residues 655 to 1084 (GLVYDTLMLK…EEPMEEEPPL (430 aa)) is histone deacetylase. 4 residues coordinate Zn(2+): C667, C669, H675, and C751. H803 is a catalytic residue. The Nuclear export signal signature appears at 1051 to 1084 (EEAETVTAMASLSVGVKPAEKRPDEEPMEEEPPL). Positions 1061–1084 (SLSVGVKPAEKRPDEEPMEEEPPL) are disordered.

It belongs to the histone deacetylase family. HD type 2 subfamily. As to quaternary structure, homodimer. Homodimerization via its N-terminal domain. Interacts with MEF2A. Interacts with MEF2C and MEF2D. Interacts with AHRR. Interacts with NR2C1. Interacts with HDAC7. Interacts with a 14-3-3 chaperone proteins in a phosphorylation dependent manner. Interacts with 14-3-3 protein YWHAB. Interacts with BTBD14B. Interacts with KDM5B. Interacts with MYOCD. Interacts with MORC2. Interacts (via PxLPxI/L motif) with ANKRA2 (via ankyrin repeats). Interacts with CUL7 (as part of the 3M complex); negatively regulated by ANKRA2. Interacts with EP300 in the presence of TFAP2C. Interacts with HSPA1A and HSPA1B leading to their deacetylation at 'Lys-77'. Interacts with ZBTB7B; the interaction allows the recruitment of HDAC4 on CD8 loci for deacetylation and possible inhibition of CD8 genes expression. Interacts with DHX36. Interacts with SIK3; this interaction leads to HDAC4 retention in the cytoplasm. Interacts with ZNF638. Phosphorylated by CaMK4 at Ser-246, Ser-467 and Ser-632. Phosphorylation at other residues by CaMK2D is required for the interaction with 14-3-3. Phosphorylation at Ser-350, within the PxLPxI/L motif, impairs the binding of ANKRA2 but generates a high-affinity docking site for 14-3-3. In terms of processing, sumoylation on Lys-559 is promoted by the E3 SUMO-protein ligase RANBP2, and prevented by phosphorylation by CaMK4. In terms of tissue distribution, ubiquitous.

It localises to the nucleus. Its subcellular location is the cytoplasm. The enzyme catalyses N(6)-acetyl-L-lysyl-[histone] + H2O = L-lysyl-[histone] + acetate. Responsible for the deacetylation of lysine residues on the N-terminal part of the core histones (H2A, H2B, H3 and H4). Histone deacetylation gives a tag for epigenetic repression and plays an important role in transcriptional regulation, cell cycle progression and developmental events. Histone deacetylases act via the formation of large multiprotein complexes. Involved in muscle maturation via its interaction with the myocyte enhancer factors such as MEF2A, MEF2C and MEF2D. Involved in the MTA1-mediated epigenetic regulation of ESR1 expression in breast cancer. Deacetylates HSPA1A and HSPA1B at 'Lys-77' leading to their preferential binding to co-chaperone STUB1. This is Histone deacetylase 4 from Homo sapiens (Human).